Reading from the N-terminus, the 292-residue chain is NAD kinase (292 aa).

D74 functions as the Proton acceptor in the catalytic mechanism. NAD(+) contacts are provided by residues D74–G75, N147–E148, D177, and T188–S193.

Belongs to the NAD kinase family. A divalent metal cation serves as cofactor.

It localises to the cytoplasm. It carries out the reaction NAD(+) + ATP = ADP + NADP(+) + H(+). Its function is as follows. Involved in the regulation of the intracellular balance of NAD and NADP, and is a key enzyme in the biosynthesis of NADP. Catalyzes specifically the phosphorylation on 2'-hydroxyl of the adenosine moiety of NAD to yield NADP. This is NAD kinase from Cytophaga hutchinsonii (strain ATCC 33406 / DSM 1761 / CIP 103989 / NBRC 15051 / NCIMB 9469 / D465).